A 91-amino-acid chain; its full sequence is Putative defective replication initiation protein (91 aa).

This Escherichia coli (strain K12) protein is Putative defective replication initiation protein (repA1).